A 440-amino-acid chain; its full sequence is Chromosome partition protein MukF (440 aa).

The interval 208 to 236 (LSETSGTLRELQDTLEAAGDKLQANLLRI) is leucine-zipper.

This sequence belongs to the MukF family. Interacts, and probably forms a ternary complex, with MukE and MukB via its C-terminal region. The complex formation is stimulated by calcium or magnesium. It is required for an interaction between MukE and MukB.

It is found in the cytoplasm. The protein resides in the nucleoid. Functionally, involved in chromosome condensation, segregation and cell cycle progression. May participate in facilitating chromosome segregation by condensation DNA from both sides of a centrally located replisome during cell division. Not required for mini-F plasmid partitioning. Probably acts via its interaction with MukB and MukE. Overexpression results in anucleate cells. It has a calcium binding activity. This chain is Chromosome partition protein MukF, found in Salmonella agona (strain SL483).